We begin with the raw amino-acid sequence, 273 residues long: Large ribosomal subunit protein uL2cz/uL2cy (273 aa).

Disordered stretches follow at residues 1 to 22 and 225 to 273; these read MAKH…DRQV and PVDH…RRRK.

This sequence belongs to the universal ribosomal protein uL2 family. In terms of assembly, part of the 50S ribosomal subunit.

It localises to the plastid. The protein localises to the chloroplast. The chain is Large ribosomal subunit protein uL2cz/uL2cy (rpl2-A) from Saccharum hybrid (Sugarcane).